Consider the following 613-residue polypeptide: tRNA 5-methylaminomethyl-2-thiouridine biosynthesis bifunctional protein MnmC (613 aa).

The interval 1–225 (MKKAKLIFKD…KREMIKAYLE (225 aa)) is tRNA (mnm(5)s(2)U34)-methyltransferase. The FAD-dependent cmnm(5)s(2)U34 oxidoreductase stretch occupies residues 252-613 (IGAGISSAVL…FLIRKLKKGL (362 aa)).

This sequence in the N-terminal section; belongs to the methyltransferase superfamily. tRNA (mnm(5)s(2)U34)-methyltransferase family. The protein in the C-terminal section; belongs to the DAO family. It depends on FAD as a cofactor.

It localises to the cytoplasm. The enzyme catalyses 5-aminomethyl-2-thiouridine(34) in tRNA + S-adenosyl-L-methionine = 5-methylaminomethyl-2-thiouridine(34) in tRNA + S-adenosyl-L-homocysteine + H(+). Functionally, catalyzes the last two steps in the biosynthesis of 5-methylaminomethyl-2-thiouridine (mnm(5)s(2)U) at the wobble position (U34) in tRNA. Catalyzes the FAD-dependent demodification of cmnm(5)s(2)U34 to nm(5)s(2)U34, followed by the transfer of a methyl group from S-adenosyl-L-methionine to nm(5)s(2)U34, to form mnm(5)s(2)U34. In Campylobacter jejuni subsp. jejuni serotype O:6 (strain 81116 / NCTC 11828), this protein is tRNA 5-methylaminomethyl-2-thiouridine biosynthesis bifunctional protein MnmC.